Reading from the N-terminus, the 92-residue chain is Small ribosomal subunit protein uS19c (92 aa).

It belongs to the universal ribosomal protein uS19 family.

It localises to the plastid. The protein localises to the chloroplast. In terms of biological role, protein S19 forms a complex with S13 that binds strongly to the 16S ribosomal RNA. The sequence is that of Small ribosomal subunit protein uS19c from Panax ginseng (Korean ginseng).